The chain runs to 287 residues: Stomatin-like protein 3 (287 aa).

Ser-3 carries the post-translational modification Phosphoserine. The helical; Signal-anchor for type III membrane protein transmembrane segment at 25–45 (WILFFLSFLLMLVTFPISVWM) threads the bilayer. At 46 to 287 (CLKIIKEYER…GNNKKVTAKA (242 aa)) the chain is on the cytoplasmic side. Position 237 is a phosphoserine (Ser-237).

Belongs to the band 7/mec-2 family. As to quaternary structure, homodimer. Interacts with PIEZO1 and PIEZO2. As to expression, expressed by all dorsal root ganglion neurons and is selectively expressed in neuronal tissues. Detected in olfactory epithelium.

The protein localises to the cell membrane. Required for the function of many mechanoreceptors. Modulate mechanotransduction channels and acid-sensing ion channels (ASIC) proteins. Potentiates PIEZO1 and PIEZO2 function by increasing their sensitivity to mechanical stimulations. The polypeptide is Stomatin-like protein 3 (Stoml3) (Mus musculus (Mouse)).